The primary structure comprises 517 residues: MAFRDSTRDFNRSRPEKRHASRSSSPRSFRPSNQNARANYNLPRVRDAMKEEERSRETKEMQEREFLRLQQLRRAIIRLKNDRSKPIDKLLVSVYLMPGPEWEENGEKNSIDFGTVDMFDPLSVIQSYKAEDLEEISRNIGDIQQLETNQCRLTYWKYVKMLVNSRMEHNKVGQFSRGLKVVAGEVQRILAPKSFEQLEQLEAQIQKKLKSNVPLDTDYWVDLLNSLKSYKAIAYLKKTFNEELQIRKNKLDNEEWDKAFSDAKKLSNMKDREEKLYIVPIDPKPILRAQAIPRRIQPEEQADYEKELNDHVNIVKSSTYIPISIPTQKQKPTLPKNSNLINEDEFSIANRARLEREYLQSDDAEEQEMLGDYVEGQTRVVNENGVTLKKPHYFNRVLLGFEWNSYNQAHFNEAHPPPKAVQGYRFNVFYPDLIGTGRAPTYRIERTRRKNKSDTTDLQDDVCIIRFIAGEPYQDIAFSIVDKDWDYSAKRDHGFKSSFDNGVLSLHFRFKKLHHRR.

Over residues 1 to 14 (MAFRDSTRDFNRSR) the composition is skewed to basic and acidic residues. Positions 1 to 59 (MAFRDSTRDFNRSRPEKRHASRSSSPRSFRPSNQNARANYNLPRVRDAMKEEERSRETK) are disordered. The span at 22–32 (RSSSPRSFRPS) shows a compositional bias: low complexity. The segment covering 44-59 (RVRDAMKEEERSRETK) has biased composition (basic and acidic residues).

The protein belongs to the CACTIN family. Interacts with sde2. Interacts with cdc5.

Functionally, plays a role in pre-mRNA splicing by facilitating excision of introns featuring long spacing between the branchpoint and 3'-splice site (ss). Recruited to the spliceosome by sde2, which may enable folding of the RNA between the BP and 3'-ss to guide the splice site towards the spliceosome's catalytic center. Assists the splicing of several components involved in chromatin organization. This Schizosaccharomyces pombe (strain 972 / ATCC 24843) (Fission yeast) protein is Splicing factor cactin.